Consider the following 209-residue polypeptide: Putative 3-methyladenine DNA glycosylase (209 aa).

A disordered region spans residues 189-209 (YISKTQPGPPPKKRKKGLESS). Positions 199 to 209 (PKKRKKGLESS) are enriched in basic residues.

Belongs to the DNA glycosylase MPG family.

In Chlorobaculum tepidum (strain ATCC 49652 / DSM 12025 / NBRC 103806 / TLS) (Chlorobium tepidum), this protein is Putative 3-methyladenine DNA glycosylase.